The sequence spans 429 residues: Adenylosuccinate synthetase (429 aa).

Residues 12–18 (GDEGKGK) and 40–42 (GHT) contribute to the GTP site. Asp-13 serves as the catalytic Proton acceptor. 2 residues coordinate Mg(2+): Asp-13 and Gly-40. Residues 13-16 (DEGK), 38-41 (NAGH), Thr-129, Arg-143, Gln-223, Thr-238, and Arg-302 contribute to the IMP site. His-41 (proton donor) is an active-site residue. Residue 298 to 304 (TVTGRKR) participates in substrate binding. GTP is bound by residues Arg-304, 330–332 (KLD), and 412–414 (STS).

Belongs to the adenylosuccinate synthetase family. In terms of assembly, homodimer. Mg(2+) is required as a cofactor.

The protein localises to the cytoplasm. It catalyses the reaction IMP + L-aspartate + GTP = N(6)-(1,2-dicarboxyethyl)-AMP + GDP + phosphate + 2 H(+). It functions in the pathway purine metabolism; AMP biosynthesis via de novo pathway; AMP from IMP: step 1/2. In terms of biological role, plays an important role in the de novo pathway of purine nucleotide biosynthesis. Catalyzes the first committed step in the biosynthesis of AMP from IMP. The protein is Adenylosuccinate synthetase of Sphingopyxis alaskensis (strain DSM 13593 / LMG 18877 / RB2256) (Sphingomonas alaskensis).